Reading from the N-terminus, the 125-residue chain is MSVVGSLIFCLDCGDLLENPNAVLGSNVECSQCKAIYPKSQFSNLKVVTTTADDAFPSSLRAKKSVVKTSLKKNELKDGATIKEKCPQCGNEEMNYHTLQLRSADEGATVFYTCTSCGYKFRTNN.

Positions 1-60 (MSVVGSLIFCLDCGDLLENPNAVLGSNVECSQCKAIYPKSQFSNLKVVTTTADDAFPSSL) are interaction with RPA2. The interval 1–69 (MSVVGSLIFC…LRAKKSVVKT (69 aa)) is necessary and sufficient for recruitment into Pol I. Cys-10, Cys-13, Cys-30, Cys-33, Cys-86, Cys-89, Cys-114, and Cys-117 together coordinate Zn(2+). Residues 10-33 (CLDCGDLLENPNAVLGSNVECSQC) form a C4-type zinc finger. The segment at 79-125 (GATIKEKCPQCGNEEMNYHTLQLRSADEGATVFYTCTSCGYKFRTNN) is required for RNA cleavage, but not essential for elongation activity. The segment at 82–122 (IKEKCPQCGNEEMNYHTLQLRSADEGATVFYTCTSCGYKFR) adopts a TFIIS-type zinc-finger fold.

It belongs to the archaeal RpoM/eukaryotic RPA12/RPB9/RPC11 RNA polymerase family. Component of the RNA polymerase I (Pol I) complex consisting of 14 subunits: RPA135, RPA190, RPC40, RPA14, RPB5, RPO26, RPA43, RPB8, RPA12, RPB10, RPC19, RPC10, RPA49 and RPA34. The complex is composed of a horseshoe-shaped core containing ten subunits (RPA135, RPA190, RPB5, RPO26, RPB8, RPB10, RPC10, RPA12, RPC19 and RPC40) where RPA135 and RPA190 form the DNA-binding cleft. Outside of the core, RPA14 and RPA43 form the stalk that mediates interactions with transcription initiation factors and newly synthesized RNA. Interacts with RPA2/RPA135. Peripheral subunit that binds the catalytic zinc ion that is required for RNA cleavage. The heterodimer formed by RPA34 and RPA49 stabilizes subunit RPA12 and stimulates RPA12-dependent RNA cleavage. Involved in the recruitment of RPA49 to Pol I.

The protein resides in the nucleus. It localises to the nucleolus. Functionally, DNA-dependent RNA polymerases catalyze the transcription of DNA into RNA using the four ribonucleoside triphosphates as substrates. Component of RNA polymerase I (Pol I) which synthesizes ribosomal RNA precursors. Besides, RNA polymerase I has intrinsic RNA cleavage activity. Proposed to contribute to the polymerase catalytic activity and form the polymerase active center together with the two largest subunits. Subunit RPA12 contributes a catalytic zinc ribbon that is required for RNA cleavage by Pol I. Involved in transcriptional termination. The polypeptide is DNA-directed RNA polymerase I subunit RPA12 (RPA12) (Saccharomyces cerevisiae (strain ATCC 204508 / S288c) (Baker's yeast)).